The chain runs to 141 residues: Ribonuclease P protein component (141 aa).

Disordered regions lie at residues 37–56 (RTEE…VGFT) and 114–141 (RRIT…VNGK). The span at 114–124 (RRITAKGERRS) shows a compositional bias: basic and acidic residues.

Belongs to the RnpA family. In terms of assembly, consists of a catalytic RNA component (M1 or rnpB) and a protein subunit.

The catalysed reaction is Endonucleolytic cleavage of RNA, removing 5'-extranucleotides from tRNA precursor.. Its function is as follows. RNaseP catalyzes the removal of the 5'-leader sequence from pre-tRNA to produce the mature 5'-terminus. It can also cleave other RNA substrates such as 4.5S RNA. The protein component plays an auxiliary but essential role in vivo by binding to the 5'-leader sequence and broadening the substrate specificity of the ribozyme. In Brucella melitensis biotype 2 (strain ATCC 23457), this protein is Ribonuclease P protein component.